The chain runs to 57 residues: UPF0391 membrane protein RHECIAT_CH0003936 (57 aa).

2 helical membrane-spanning segments follow: residues 4–24 (WALI…SGVS) and 33–53 (VLFG…LMAG).

Belongs to the UPF0391 family.

Its subcellular location is the cell membrane. The polypeptide is UPF0391 membrane protein RHECIAT_CH0003936 (Rhizobium etli (strain CIAT 652)).